The sequence spans 495 residues: WD repeat-containing protein 37 (495 aa).

Composition is skewed to polar residues over residues 1–13 and 22–31; these read MPTE…TARQ and SLSIRRTNSS. The disordered stretch occupies residues 1–50; the sequence is MPTESASCSTARQTKQKRKSHSLSIRRTNSSEQERTGLPRDMLEGQDSKL. The span at 32-47 shows a compositional bias: basic and acidic residues; sequence EQERTGLPRDMLEGQD. WD repeat units follow at residues 154 to 194 and 197 to 236; these read GHRD…CLVK and GHVG…PTPQ. The disordered stretch occupies residues 237-266; the sequence is PVADTSQISGEDEVECSDKDEPDLDGDVSS. Residues 246-264 show a composition bias toward acidic residues; that stretch reads GEDEVECSDKDEPDLDGDV. WD repeat units lie at residues 280–319, 322–361, 366–404, 407–446, and 453–494; these read SHQG…LVHS, GHDQ…IHSV, GHTD…SPIA, RTDS…LARL, and GHRR…LLQE.

As to quaternary structure, forms homodimers. Interacts with PACS1. Interacts with PACS2.

It is found in the cytoplasm. Its subcellular location is the nucleus. Functionally, required for normal ER Ca2+ handling in lymphocytes. Together with PACS1, it plays an essential role in stabilizing peripheral lymphocyte populations. In Pongo abelii (Sumatran orangutan), this protein is WD repeat-containing protein 37 (WDR37).